The primary structure comprises 315 residues: Replication factor C small subunit (315 aa).

Gly-43–Thr-50 is an ATP binding site.

The protein belongs to the activator 1 small subunits family. RfcS subfamily. In terms of assembly, heteromultimer composed of small subunits (RfcS) and large subunits (RfcL).

In terms of biological role, part of the RFC clamp loader complex which loads the PCNA sliding clamp onto DNA. In Methanococcus maripaludis (strain C6 / ATCC BAA-1332), this protein is Replication factor C small subunit.